Here is a 339-residue protein sequence, read N- to C-terminus: tRNA N6-adenosine threonylcarbamoyltransferase (339 aa).

Fe cation is bound by residues H111 and H115. Substrate is bound by residues 134 to 138, D167, G180, and N272; that span reads LVSGG. Residue D300 coordinates Fe cation.

The protein belongs to the KAE1 / TsaD family. It depends on Fe(2+) as a cofactor.

It localises to the cytoplasm. The enzyme catalyses L-threonylcarbamoyladenylate + adenosine(37) in tRNA = N(6)-L-threonylcarbamoyladenosine(37) in tRNA + AMP + H(+). In terms of biological role, required for the formation of a threonylcarbamoyl group on adenosine at position 37 (t(6)A37) in tRNAs that read codons beginning with adenine. Is involved in the transfer of the threonylcarbamoyl moiety of threonylcarbamoyl-AMP (TC-AMP) to the N6 group of A37, together with TsaE and TsaB. TsaD likely plays a direct catalytic role in this reaction. The chain is tRNA N6-adenosine threonylcarbamoyltransferase from Vibrio cholerae serotype O1 (strain ATCC 39541 / Classical Ogawa 395 / O395).